A 106-amino-acid chain; its full sequence is Malonate decarboxylase acyl carrier protein (106 aa).

An O-(phosphoribosyl dephospho-coenzyme A)serine modification is found at S28.

Belongs to the MdcC family. In terms of processing, covalently binds the prosthetic group of malonate decarboxylase.

Its subcellular location is the cytoplasm. In terms of biological role, subunit of malonate decarboxylase, it is an acyl carrier protein to which acetyl and malonyl thioester residues are bound via a 2'-(5''-phosphoribosyl)-3'-dephospho-CoA prosthetic group and turn over during the catalytic mechanism. This is Malonate decarboxylase acyl carrier protein from Stenotrophomonas maltophilia (strain R551-3).